Here is a 297-residue protein sequence, read N- to C-terminus: Phosphatidylglycerol--prolipoprotein diacylglyceryl transferase (297 aa).

4 consecutive transmembrane segments (helical) span residues 20–40 (FLTI…GLFV), 50–70 (INPL…IIGA), 105–125 (AVWE…LSII), and 133–153 (IHLK…QSIG). Residue Arg-154 coordinates a 1,2-diacyl-sn-glycero-3-phospho-(1'-sn-glycerol). The next 3 helical transmembrane spans lie at 193–213 (PTFL…IFVF), 225–245 (GFIS…IEGL), and 266–286 (AQFI…FLRL).

The protein belongs to the Lgt family.

It localises to the cell inner membrane. The catalysed reaction is L-cysteinyl-[prolipoprotein] + a 1,2-diacyl-sn-glycero-3-phospho-(1'-sn-glycerol) = an S-1,2-diacyl-sn-glyceryl-L-cysteinyl-[prolipoprotein] + sn-glycerol 1-phosphate + H(+). The protein operates within protein modification; lipoprotein biosynthesis (diacylglyceryl transfer). Catalyzes the transfer of the diacylglyceryl group from phosphatidylglycerol to the sulfhydryl group of the N-terminal cysteine of a prolipoprotein, the first step in the formation of mature lipoproteins. The protein is Phosphatidylglycerol--prolipoprotein diacylglyceryl transferase of Prochlorococcus marinus (strain MIT 9312).